The primary structure comprises 55 residues: ATP synthase F(0) complex subunit 8 (55 aa).

The helical transmembrane segment at 4–24 threads the bilayer; that stretch reads LNPAPWFAILVFSWLVFLTVI. The disordered stretch occupies residues 34-55; that stretch reads TNEPTSQSTEKAKPEPWNWPWH.

Belongs to the ATPase protein 8 family. In terms of assembly, component of the ATP synthase complex composed at least of ATP5F1A/subunit alpha, ATP5F1B/subunit beta, ATP5MC1/subunit c (homooctomer), MT-ATP6/subunit a, MT-ATP8/subunit 8, ATP5ME/subunit e, ATP5MF/subunit f, ATP5MG/subunit g, ATP5MK/subunit k, ATP5MJ/subunit j, ATP5F1C/subunit gamma, ATP5F1D/subunit delta, ATP5F1E/subunit epsilon, ATP5PF/subunit F6, ATP5PB/subunit b, ATP5PD/subunit d, ATP5PO/subunit OSCP. ATP synthase complex consists of a soluble F(1) head domain (subunits alpha(3) and beta(3)) - the catalytic core - and a membrane F(0) domain - the membrane proton channel (subunits c, a, 8, e, f, g, k and j). These two domains are linked by a central stalk (subunits gamma, delta, and epsilon) rotating inside the F1 region and a stationary peripheral stalk (subunits F6, b, d, and OSCP).

It localises to the mitochondrion membrane. In terms of biological role, subunit 8, of the mitochondrial membrane ATP synthase complex (F(1)F(0) ATP synthase or Complex V) that produces ATP from ADP in the presence of a proton gradient across the membrane which is generated by electron transport complexes of the respiratory chain. ATP synthase complex consist of a soluble F(1) head domain - the catalytic core - and a membrane F(1) domain - the membrane proton channel. These two domains are linked by a central stalk rotating inside the F(1) region and a stationary peripheral stalk. During catalysis, ATP synthesis in the catalytic domain of F(1) is coupled via a rotary mechanism of the central stalk subunits to proton translocation. In vivo, can only synthesize ATP although its ATP hydrolase activity can be activated artificially in vitro. Part of the complex F(0) domain. This chain is ATP synthase F(0) complex subunit 8, found in Oncorhynchus mykiss (Rainbow trout).